The primary structure comprises 551 residues: MDFRRYFLWGALFISGYLLFLQWSQDYGPQSTQSVAQSTQSQSETNSQMSDDLPMATQSTTEANAEIPQSVTKIAPGKLIEVTTDTLRVAINPVGGDLVEAALLQYKKELGQPDPFVILEDGSERTYVTQSGLVGQDGPDASPEGRPVYQSEKTAYTLADGENSLDVNLYYTDAKGVKYTKTFRFMKGKYRIRQLITVDNTSSNTWRGNLFAQIKRDNTPDPSKATSMGLQPYLGGAISDEQTKYTKVSFSDMKEDPIKTTTTKGWVAVLQHYFVSAWIPEQGQKVTLQARTNGDFNIIGFTGTSVEIAPGKQGTLSSTFYVGPKLQDHLESTAENLDLTVDYGWLWWLAKPLFWLLTLIQSFVINWGIAIILIVVCVKAIFFKLSAASYRSMAKMRKFGPEIAKLKEKYGDDRQKMSQEMMALYKKEKINPLGGCLPILVQMPVFLSLYWVLMESVELRHAPFFLWIHDLSVMDPYFILPILMGISMFVQQSLNPTPPDPMQARIMKIMPVAFSIFFLWFPAGLVLYWVTNNTLSILQQYVITKRIENEA.

Residues 6-26 (YFLWGALFISGYLLFLQWSQD) form a helical membrane-spanning segment. Low complexity predominate over residues 34 to 50 (SVAQSTQSQSETNSQMS). The interval 34-68 (SVAQSTQSQSETNSQMSDDLPMATQSTTEANAEIP) is disordered. Over residues 56-68 (ATQSTTEANAEIP) the composition is skewed to polar residues. Helical transmembrane passes span 340–360 (TVDY…LTLI), 363–383 (FVIN…AIFF), 433–453 (LGGC…YWVL), 464–484 (FFLW…PILM), and 509–529 (IMPV…VLYW).

The protein belongs to the OXA1/ALB3/YidC family. Type 1 subfamily. Interacts with the Sec translocase complex via SecD. Specifically interacts with transmembrane segments of nascent integral membrane proteins during membrane integration.

The protein localises to the cell inner membrane. Functionally, required for the insertion and/or proper folding and/or complex formation of integral membrane proteins into the membrane. Involved in integration of membrane proteins that insert both dependently and independently of the Sec translocase complex, as well as at least some lipoproteins. Aids folding of multispanning membrane proteins. This chain is Membrane protein insertase YidC, found in Marinomonas sp. (strain MWYL1).